A 295-amino-acid chain; its full sequence is Large ribosomal subunit protein uL2 (295 aa).

Positions 243-295 (WRPHTRGTAMNPVDHPHGGGEGRTRGKHPESPWDGRRRDTRREGVRSTPISLS) are disordered. Residues 256-287 (DHPHGGGEGRTRGKHPESPWDGRRRDTRREGV) show a composition bias toward basic and acidic residues.

It belongs to the universal ribosomal protein uL2 family. In terms of assembly, part of the 50S ribosomal subunit. Forms a bridge to the 30S subunit in the 70S ribosome.

Its function is as follows. One of the primary rRNA binding proteins. Required for association of the 30S and 50S subunits to form the 70S ribosome, for tRNA binding and peptide bond formation. It has been suggested to have peptidyltransferase activity; this is somewhat controversial. Makes several contacts with the 16S rRNA in the 70S ribosome. The chain is Large ribosomal subunit protein uL2 from Aquifex pyrophilus.